A 417-amino-acid chain; its full sequence is Serine hydroxymethyltransferase (417 aa).

(6S)-5,6,7,8-tetrahydrofolate-binding positions include Leu112 and 116-118 (GHL). An N6-(pyridoxal phosphate)lysine modification is found at Lys221. Glu247 lines the (6S)-5,6,7,8-tetrahydrofolate pocket.

It belongs to the SHMT family. As to quaternary structure, homodimer. The cofactor is pyridoxal 5'-phosphate.

The protein resides in the cytoplasm. It carries out the reaction (6R)-5,10-methylene-5,6,7,8-tetrahydrofolate + glycine + H2O = (6S)-5,6,7,8-tetrahydrofolate + L-serine. It functions in the pathway one-carbon metabolism; tetrahydrofolate interconversion. Its pathway is amino-acid biosynthesis; glycine biosynthesis; glycine from L-serine: step 1/1. In terms of biological role, catalyzes the reversible interconversion of serine and glycine with tetrahydrofolate (THF) serving as the one-carbon carrier. This reaction serves as the major source of one-carbon groups required for the biosynthesis of purines, thymidylate, methionine, and other important biomolecules. Also exhibits THF-independent aldolase activity toward beta-hydroxyamino acids, producing glycine and aldehydes, via a retro-aldol mechanism. This is Serine hydroxymethyltransferase from Borreliella afzelii (strain PKo) (Borrelia afzelii).